Consider the following 698-residue polypeptide: Colicin V secretion/processing ATP-binding protein CvaB (698 aa).

In terms of domain architecture, Peptidase C39 spans glutamine 26–valine 145. The active site involves cysteine 32. 7 consecutive transmembrane segments (helical) span residues glycine 33 to leucine 53, valine 92 to valine 112, leucine 176 to glycine 196, glycine 211 to serine 231, threonine 289 to tyrosine 311, leucine 315 to tyrosine 334, and isoleucine 412 to phenylalanine 432. The region spanning leucine 176–isoleucine 458 is the ABC transmembrane type-1 domain. The region spanning leucine 492–isoleucine 698 is the ABC transporter domain. Residue glycine 526–threonine 533 coordinates ATP.

The protein belongs to the ABC transporter superfamily. Colicin V exporter (TC 3.A.1.110.2) family.

The protein resides in the cell membrane. Its function is as follows. Involved, in conjunction with CvaA, in the secretion of colicin V. The sequence is that of Colicin V secretion/processing ATP-binding protein CvaB (cvaB) from Escherichia coli.